The sequence spans 145 residues: Ribosome maturation factor RimP (145 aa).

The protein belongs to the RimP family.

The protein localises to the cytoplasm. Functionally, required for maturation of 30S ribosomal subunits. The chain is Ribosome maturation factor RimP from Borrelia garinii subsp. bavariensis (strain ATCC BAA-2496 / DSM 23469 / PBi) (Borreliella bavariensis).